The following is a 1119-amino-acid chain: G8 domain-containing protein DDB_G0288475 (1119 aa).

The signal sequence occupies residues 1 to 22; it reads MKYSSFLLLFIYIFFILNNINA. A G8 domain is found at 276–404; the sequence is TIWTSGVVPL…YHNTWTKLAA (129 aa). N-linked (GlcNAc...) asparagine glycosylation is found at Asn-308, Asn-559, Asn-736, Asn-854, Asn-968, Asn-1035, Asn-1056, and Asn-1070.

This sequence belongs to the comF family.

It is found in the secreted. This chain is G8 domain-containing protein DDB_G0288475, found in Dictyostelium discoideum (Social amoeba).